The sequence spans 354 residues: Aspartate carbamoyltransferase catalytic subunit (354 aa).

Carbamoyl phosphate-binding residues include R67 and T68. Residue K95 coordinates L-aspartate. Positions 117, 150, and 153 each coordinate carbamoyl phosphate. 2 residues coordinate L-aspartate: R190 and R261. Positions 302 and 303 each coordinate carbamoyl phosphate.

It belongs to the aspartate/ornithine carbamoyltransferase superfamily. ATCase family. In terms of assembly, heterododecamer (2C3:3R2) of six catalytic PyrB chains organized as two trimers (C3), and six regulatory PyrI chains organized as three dimers (R2).

The enzyme catalyses carbamoyl phosphate + L-aspartate = N-carbamoyl-L-aspartate + phosphate + H(+). The protein operates within pyrimidine metabolism; UMP biosynthesis via de novo pathway; (S)-dihydroorotate from bicarbonate: step 2/3. Functionally, catalyzes the condensation of carbamoyl phosphate and aspartate to form carbamoyl aspartate and inorganic phosphate, the committed step in the de novo pyrimidine nucleotide biosynthesis pathway. The protein is Aspartate carbamoyltransferase catalytic subunit of Synechococcus sp. (strain RCC307).